We begin with the raw amino-acid sequence, 1690 residues long: DNA-directed RNA polymerase subunit beta' (1690 aa).

The Zn(2+) site is built by Cys-63, Cys-65, Cys-78, and Cys-81. Residues Asp-753, Asp-755, and Asp-757 each contribute to the Mg(2+) site. Residues Cys-1107, Cys-1295, Cys-1302, and Cys-1305 each coordinate Zn(2+).

It belongs to the RNA polymerase beta' chain family. As to quaternary structure, the RNAP catalytic core consists of 2 alpha, 1 beta, 1 beta' and 1 omega subunit. When a sigma factor is associated with the core the holoenzyme is formed, which can initiate transcription. Mg(2+) is required as a cofactor. Zn(2+) serves as cofactor.

The enzyme catalyses RNA(n) + a ribonucleoside 5'-triphosphate = RNA(n+1) + diphosphate. Its function is as follows. DNA-dependent RNA polymerase catalyzes the transcription of DNA into RNA using the four ribonucleoside triphosphates as substrates. This Thermotoga sp. (strain RQ2) protein is DNA-directed RNA polymerase subunit beta'.